A 153-amino-acid polypeptide reads, in one-letter code: Histone H2B.4 (153 aa).

Composition is skewed to basic and acidic residues over residues 1 to 28 and 36 to 53; these read MAPKAEKKPAAKKPAEEEPAAEKAEKAP and EKRLPAGKAEKGSGEGKK. Residues 1-61 are disordered; sequence MAPKAEKKPA…KKAGRKKAKK (61 aa). N6-acetyllysine is present on residues K7 and K37. K149 is covalently cross-linked (Glycyl lysine isopeptide (Lys-Gly) (interchain with G-Cter in ubiquitin)).

This sequence belongs to the histone H2B family. The nucleosome is a histone octamer containing two molecules each of H2A, H2B, H3 and H4 assembled in one H3-H4 heterotetramer and two H2A-H2B heterodimers. The octamer wraps approximately 147 bp of DNA. In terms of processing, can be acetylated to form H2BK6ac and H2BK33ac. Post-translationally, monoubiquitinated by BRE1 to form H2BK143ub1 and deubiquitinated by UBP26. Required for heterochromatic histone H3 di- and trimethylation at H3K4me. May give a specific tag for epigenetic transcriptional activation.

The protein localises to the nucleus. The protein resides in the chromosome. Core component of nucleosome. Nucleosomes wrap and compact DNA into chromatin, limiting DNA accessibility to the cellular machineries which require DNA as a template. Histones thereby play a central role in transcription regulation, DNA repair, DNA replication and chromosomal stability. DNA accessibility is regulated via a complex set of post-translational modifications of histones, also called histone code, and nucleosome remodeling. In Oryza sativa subsp. indica (Rice), this protein is Histone H2B.4 (H2B.4).